We begin with the raw amino-acid sequence, 441 residues long: tRNA modification GTPase MnmE (441 aa).

The (6S)-5-formyl-5,6,7,8-tetrahydrofolate site is built by Arg23, Glu81, and Arg121. A TrmE-type G domain is found at 219–366 (GFTVVLAGAP…LLDAIQAAAE (148 aa)). GTP is bound by residues 229–234 (NSGKST), 248–254 (SDSPGTT), and 273–276 (DTAG). Mg(2+) is bound by residues Ser233 and Thr254. Residue Lys441 coordinates (6S)-5-formyl-5,6,7,8-tetrahydrofolate.

The protein belongs to the TRAFAC class TrmE-Era-EngA-EngB-Septin-like GTPase superfamily. TrmE GTPase family. As to quaternary structure, homodimer. Heterotetramer of two MnmE and two MnmG subunits. K(+) serves as cofactor.

It localises to the cytoplasm. In terms of biological role, exhibits a very high intrinsic GTPase hydrolysis rate. Involved in the addition of a carboxymethylaminomethyl (cmnm) group at the wobble position (U34) of certain tRNAs, forming tRNA-cmnm(5)s(2)U34. The polypeptide is tRNA modification GTPase MnmE (Methylobacterium radiotolerans (strain ATCC 27329 / DSM 1819 / JCM 2831 / NBRC 15690 / NCIMB 10815 / 0-1)).